We begin with the raw amino-acid sequence, 304 residues long: Quinolinate synthase (304 aa).

2 residues coordinate iminosuccinate: His-23 and Ser-40. Cys-85 is a [4Fe-4S] cluster binding site. Iminosuccinate contacts are provided by residues 111 to 113 (YIN) and Ser-128. Cys-171 lines the [4Fe-4S] cluster pocket. Iminosuccinate-binding positions include 197–199 (HPE) and Thr-214. Cys-259 contacts [4Fe-4S] cluster.

It belongs to the quinolinate synthase family. Type 2 subfamily. [4Fe-4S] cluster serves as cofactor.

The protein localises to the cytoplasm. The enzyme catalyses iminosuccinate + dihydroxyacetone phosphate = quinolinate + phosphate + 2 H2O + H(+). The protein operates within cofactor biosynthesis; NAD(+) biosynthesis; quinolinate from iminoaspartate: step 1/1. Its function is as follows. Catalyzes the condensation of iminoaspartate with dihydroxyacetone phosphate to form quinolinate. This chain is Quinolinate synthase, found in Clostridioides difficile (strain 630) (Peptoclostridium difficile).